A 54-amino-acid polypeptide reads, in one-letter code: Ovomucoid (54 aa).

The region spanning 4–54 (VDCSEYPKPACTMEHRPLCGSDNQTYDNKCNFCNAVVESNGTLTLSHFGKC) is the Kazal-like domain. Disulfide bonds link Cys6/Cys36, Cys14/Cys33, and Cys22/Cys54. Asn43 is a glycosylation site (N-linked (GlcNAc...) asparagine).

It is found in the secreted. This is Ovomucoid from Guttera pucherani (Eastern crested guineafowl).